The primary structure comprises 235 residues: Superoxide dismutase [Mn] 3.1, mitochondrial (235 aa).

Residues 1–31 (MALRTLASKKVLSFPFGGAGRPLAAAASARG) constitute a mitochondrion transit peptide. Mn(2+)-binding residues include His-59, His-107, Asp-196, and His-200.

This sequence belongs to the iron/manganese superoxide dismutase family. Homotetramer. Mn(2+) serves as cofactor.

Its subcellular location is the mitochondrion matrix. It catalyses the reaction 2 superoxide + 2 H(+) = H2O2 + O2. In terms of biological role, destroys superoxide anion radicals which are normally produced within the cells and which are toxic to biological systems. This is Superoxide dismutase [Mn] 3.1, mitochondrial (SODA.4) from Zea mays (Maize).